Here is a 466-residue protein sequence, read N- to C-terminus: Alpha-galacturonidase (466 aa).

11–78 (VKIAYIGGGS…GKWNYETANT (68 aa)) lines the NAD(+) pocket. Asn-157 is a substrate binding site. Cys-179 serves as a coordination point for Mn(2+). His-180 (proton donor) is an active-site residue. Mn(2+) is bound at residue His-216.

This sequence belongs to the glycosyl hydrolase 4 family. As to quaternary structure, homotetramer. Requires NAD(+) as cofactor. The cofactor is Mn(2+).

The catalysed reaction is [(1-&gt;4)-alpha-D-galacturonosyl](n) + H2O = alpha-D-galacturonate + [(1-&gt;4)-alpha-D-galacturonosyl](n-1). Its function is as follows. Alpha-galacturonidase able to catalyze the hydrolysis of the chromogenic substrate p-nitrophenyl-alpha-D-galacturonic acid (pNPalphaGalUA). It is probable that alpha-1,4-di-galacturonate (GalUA(2)) is the naturally occurring substrate. The chain is Alpha-galacturonidase from Lachnoclostridium phytofermentans (strain ATCC 700394 / DSM 18823 / ISDg) (Clostridium phytofermentans).